Consider the following 342-residue polypeptide: UDP-N-acetylglucosamine--N-acetylmuramyl-(pentapeptide) pyrophosphoryl-undecaprenol N-acetylglucosamine transferase (342 aa).

UDP-N-acetyl-alpha-D-glucosamine is bound by residues 10 to 12 (TGG), asparagine 124, serine 177, and glutamine 275.

It belongs to the glycosyltransferase 28 family. MurG subfamily.

It is found in the cell inner membrane. The enzyme catalyses di-trans,octa-cis-undecaprenyl diphospho-N-acetyl-alpha-D-muramoyl-L-alanyl-D-glutamyl-meso-2,6-diaminopimeloyl-D-alanyl-D-alanine + UDP-N-acetyl-alpha-D-glucosamine = di-trans,octa-cis-undecaprenyl diphospho-[N-acetyl-alpha-D-glucosaminyl-(1-&gt;4)]-N-acetyl-alpha-D-muramoyl-L-alanyl-D-glutamyl-meso-2,6-diaminopimeloyl-D-alanyl-D-alanine + UDP + H(+). The protein operates within cell wall biogenesis; peptidoglycan biosynthesis. Cell wall formation. Catalyzes the transfer of a GlcNAc subunit on undecaprenyl-pyrophosphoryl-MurNAc-pentapeptide (lipid intermediate I) to form undecaprenyl-pyrophosphoryl-MurNAc-(pentapeptide)GlcNAc (lipid intermediate II). This is UDP-N-acetylglucosamine--N-acetylmuramyl-(pentapeptide) pyrophosphoryl-undecaprenol N-acetylglucosamine transferase from Campylobacter jejuni subsp. jejuni serotype O:6 (strain 81116 / NCTC 11828).